The following is a 71-amino-acid chain: Small ribosomal subunit protein bS18 (71 aa).

This sequence belongs to the bacterial ribosomal protein bS18 family. As to quaternary structure, part of the 30S ribosomal subunit. Forms a tight heterodimer with protein bS6.

Its function is as follows. Binds as a heterodimer with protein bS6 to the central domain of the 16S rRNA, where it helps stabilize the platform of the 30S subunit. This Microcystis aeruginosa (strain NIES-843 / IAM M-2473) protein is Small ribosomal subunit protein bS18.